The primary structure comprises 332 residues: Biotin synthase (332 aa).

The 228-residue stretch at 51–278 (RTIQLSTLMS…KSYVRLSAGR (228 aa)) folds into the Radical SAM core domain. [4Fe-4S] cluster is bound by residues Cys66, Cys70, and Cys73. The [2Fe-2S] cluster site is built by Cys110, Cys141, Cys201, and Arg273.

The protein belongs to the radical SAM superfamily. Biotin synthase family. As to quaternary structure, homodimer. Requires [4Fe-4S] cluster as cofactor. [2Fe-2S] cluster serves as cofactor.

The catalysed reaction is (4R,5S)-dethiobiotin + (sulfur carrier)-SH + 2 reduced [2Fe-2S]-[ferredoxin] + 2 S-adenosyl-L-methionine = (sulfur carrier)-H + biotin + 2 5'-deoxyadenosine + 2 L-methionine + 2 oxidized [2Fe-2S]-[ferredoxin]. The protein operates within cofactor biosynthesis; biotin biosynthesis; biotin from 7,8-diaminononanoate: step 2/2. Its function is as follows. Catalyzes the conversion of dethiobiotin (DTB) to biotin by the insertion of a sulfur atom into dethiobiotin via a radical-based mechanism. The polypeptide is Biotin synthase (Haemophilus influenzae (strain PittGG)).